The chain runs to 637 residues: Zinc finger protein rsv2 (637 aa).

6 disordered regions span residues 1 to 41 (MDTT…SKMN), 145 to 164 (SNHQ…PTSA), 169 to 207 (IITA…QPFS), 221 to 363 (TGAI…STAL), 404 to 427 (QDSF…TRSY), and 440 to 558 (SVNP…GAQR). A compositionally biased stretch (low complexity) spans 172 to 189 (ANSSPSGNAGSNASASMS). Polar residues predominate over residues 196–207 (PSASTINDQPFS). Positions 279-296 (SDLKRSLGHNQKSDRVSK) are enriched in basic and acidic residues. A compositionally biased stretch (polar residues) spans 298–344 (VSPQHQANPSTLNNPLKTQNFDSSKNLYTDNKDSSLVSPTGLQSRME). Composition is skewed to basic and acidic residues over residues 345–355 (QNPEVRAHPMK) and 404–413 (QDSFNKESIK). Over residues 455–471 (VPSNTTISSSPPLTSPV) the composition is skewed to low complexity. 2 stretches are compositionally biased toward polar residues: residues 472 to 498 (KTSA…QSAA) and 508 to 527 (YYNT…QKVS). The segment covering 544–554 (TTPTNSSTTAT) has biased composition (low complexity). The segment at 572–603 (VRCTLQNRVTGEICNTVFSRTYDLIRHQDTIH) adopts a C2H2-type 1 zinc-finger fold. Residues 610–635 (FRCEICGDQRHFSRHDALVRHLRVKH) form a C2H2-type 2; degenerate zinc finger.

It is found in the nucleus. The sequence is that of Zinc finger protein rsv2 (rsv2) from Schizosaccharomyces pombe (strain 972 / ATCC 24843) (Fission yeast).